A 986-amino-acid polypeptide reads, in one-letter code: MKVVNLKQAILQAWKERWSDYQWAINMKRFFPRGATWDILNLAEALLEQAMIGPSPNPLILSYLKYAISSQMVSYSTVLTAISKFDDFSRDLCVQSLLEIMDMFCDRLSCHGRAEECIGLCRALMSALNWLLRCAAFYAEKVKEMLEQVAAEGQMKMCLERLEKMLSSTKNRALIHIAQLEETSSWNAVEQSLLKLEESLNGLSNSTLRSQADDCISLIKSIPTMLSVRSEQLNKTGFPTVHAVVLLEGTMNLTGEIQPLVEQLMMVKRMQRIPPPLFMLEIWKACFVGLIESPEGTEELKWTAFTFLKIPQVLVELKNYPHGDKDFTEDVNCAFEFLLKLTPLLDKADQRCNCNCMSLLLQECSKQGLLSEANMTNLTDKRKADREDAPQLQSAENANIQPNPRLILRAEPTVTNILKTMDADHSKSPEGLLGVLGHMLSGKSLDLLLAAAAATGKLKSFAWKFIKLNEFTKHISTENSKSAPVRALLFDISFLMLCHVAQTYGSEVILSESRPADEVPFFETWMLTCMPEEGKILNPDHPCFRPDSTKVESLVALLNNSSEMKLVQINWHEVCLSISAAILEILNAWENSVLTFESIQKITDNIKGKVCSMAVCAVAWLVAHVRMLGLDEREKSLQMIRQLATPLYGDNTLQFYNERVVIMSSILEHMCADVLQQTATQIKFPSTGMDTIPYWNLLPPKKPIKEVLTSVFTKVLEKGWVDSRSIHIFDSLLHMGGVYWFCNNLVKELLKETRKEHTLRAVELLYAIFCLDMQQLTLTLLGHILPNLLTDSSKWHTLMDPPGKALAKLSVWCALSSYSSHNKGQASARQKKRHREDIEDYISLFPLDDTRPSKLMRLLSSNEEDANILSSPNRSMSSSLSASQLHAVSMRDPLNRVLANLFLLISSILGSKTAGTHTQFVQWFMEECVDCLEQGSHGSILQFMPFTMVSELVKVSTMSSPKIVLAITDLGLPLGRRVAAKAIAAL.

6 consecutive short sequence motifs (LXXLL motif) follow at residues 128–132 (LNWLL), 341–345 (LTPLL), 445–449 (LDLLL), 554–558 (LVALL), 785–789 (LPNLL), and 855–859 (LMRLL).

Belongs to the Mediator complex subunit 24 family. As to quaternary structure, component of the Mediator complex.

It is found in the nucleus. Its function is as follows. Component of the Mediator complex, a coactivator involved in the regulated transcription of nearly all RNA polymerase II-dependent genes. Mediator functions as a bridge to convey information from gene-specific regulatory proteins to the basal RNA polymerase II transcription machinery. Mediator is recruited to promoters by direct interactions with regulatory proteins and serves as a scaffold for the assembly of a functional preinitiation complex with RNA polymerase II and the general transcription factors. This is Mediator of RNA polymerase II transcription subunit 24 (MED24) from Gallus gallus (Chicken).